We begin with the raw amino-acid sequence, 196 residues long: Histone H1.0-B (196 aa).

2 disordered regions span residues 1 to 29 (MAEN…PKYS) and 86 to 196 (GVGA…GRKK). Residues 24 to 97 (DHPKYSDMIL…GASGSFRLAK (74 aa)) enclose the H15 domain. Basic residues predominate over residues 104-196 (PAKKPKKEIK…ASPKKSGRKK (93 aa)).

This sequence belongs to the histone H1/H5 family.

It localises to the nucleus. Its subcellular location is the chromosome. Its function is as follows. Histones H1 are necessary for the condensation of nucleosome chains into higher-order structures. The histones H1.0 are found in cells that are in terminal stages of differentiation or that have low rates of cell division. This chain is Histone H1.0-B (h1-0-b), found in Xenopus laevis (African clawed frog).